Reading from the N-terminus, the 130-residue chain is Small ribosomal subunit protein uS8 (130 aa).

This sequence belongs to the universal ribosomal protein uS8 family. Part of the 30S ribosomal subunit. Contacts proteins S5 and S12.

In terms of biological role, one of the primary rRNA binding proteins, it binds directly to 16S rRNA central domain where it helps coordinate assembly of the platform of the 30S subunit. The chain is Small ribosomal subunit protein uS8 from Saccharophagus degradans (strain 2-40 / ATCC 43961 / DSM 17024).